A 236-amino-acid polypeptide reads, in one-letter code: H2HPP isomerase (236 aa).

Cupin type-2 domains follow at residues 40 to 106 (YVPP…AIDI) and 151 to 215 (NIPG…SKSV). Residues H50, H52, Q56, H91, H162, H164, Q168, and H202 each contribute to the a divalent metal cation site. Substrate is bound at residue Y223.

Monomer. Fe(2+) serves as cofactor. Co(2+) is required as a cofactor.

The protein resides in the cytoplasm. The catalysed reaction is 3-[(4R)-4-hydroxycyclohexa-1,5-dien-1-yl]-2-oxopropanoate = 3-[(1E,4R)-4-hydroxycyclohex-2-en-1-ylidene]pyruvate. Its pathway is antibiotic biosynthesis; bacilysin biosynthesis. In terms of biological role, part of the bacABCDEF operon responsible for the biosynthesis of the nonribosomally synthesized dipeptide antibiotic bacilysin, composed of L-alanine and L-anticapsin. Bacilysin is an irreversible inactivator of the glutaminase domain of glucosamine synthetase. BacB catalyzes the allylic isomerization of the endocyclic-delta(4),delta(8)-7R-dihydro-hydroxyphenylpyruvate (en-H2HPP) to generate a mixture of 3E,7R- and 3Z, 7R-olefins of the exocyclic-delta(3),delta(5)-dihydro-hydroxyphenylpyruvate (ex-H2HPP). In Bacillus amyloliquefaciens (Bacillus velezensis), this protein is H2HPP isomerase.